The chain runs to 211 residues: Ribosomal RNA small subunit methyltransferase G (211 aa).

Residues Gly-73, 126–127 (IE), and Arg-142 contribute to the S-adenosyl-L-methionine site.

The protein belongs to the methyltransferase superfamily. RNA methyltransferase RsmG family.

The protein localises to the cytoplasm. It carries out the reaction guanosine(527) in 16S rRNA + S-adenosyl-L-methionine = N(7)-methylguanosine(527) in 16S rRNA + S-adenosyl-L-homocysteine. Specifically methylates the N7 position of guanine in position 527 of 16S rRNA. The chain is Ribosomal RNA small subunit methyltransferase G from Methylorubrum extorquens (strain PA1) (Methylobacterium extorquens).